Reading from the N-terminus, the 110-residue chain is Snake venom vascular endothelial growth factor toxin (110 aa).

Q1 carries the pyrrolidone carboxylic acid modification. 3 disulfides stabilise this stretch: C14-C56, C45-C91, and C49-C93.

The protein belongs to the PDGF/VEGF growth factor family. Snake venom VEGF subfamily. Homodimer; disulfide-linked. Expressed by the venom gland.

It is found in the secreted. In terms of biological role, snake venom VEGFs that may contribute to venom dispersion and prey subjugation by inducing vascular permeability and hypotension. This protein potently stimulates dermal human microvascular endothelial cell (dHMVEC) proliferation in a VEGFR-2 dependent manner. This stimulatory effect is correlated with activation of the MAPK Erk1/2 signaling pathway. It also appears to be a chemoattractant for migration of these cells and stimulates their radial migration in a collagen gel. In vivo, it induces angiogenesis in a Japanese quail assay. This pro-angiogenic effect may also be related to its interaction with VEGFR-2. In addition, it may induce an increase in capillary permeability after intradermal injection, as well as a drastic hypotensive effect after intravenous injection. The hypotension is mediated by nitric oxide (NO), which is produced by VEGF-activated endothelium NO synthase. This Daboia palaestinae (Palestine viper) protein is Snake venom vascular endothelial growth factor toxin.